Here is a 442-residue protein sequence, read N- to C-terminus: 3-phosphoshikimate 1-carboxyvinyltransferase (442 aa).

Residues K25, S26, and R30 each coordinate 3-phosphoshikimate. K25 contributes to the phosphoenolpyruvate binding site. Residues G97 and R125 each contribute to the phosphoenolpyruvate site. 3-phosphoshikimate contacts are provided by S170, Q172, D323, and K350. Q172 is a binding site for phosphoenolpyruvate. The active-site Proton acceptor is the D323. Positions 354 and 399 each coordinate phosphoenolpyruvate.

Belongs to the EPSP synthase family. In terms of assembly, monomer.

Its subcellular location is the cytoplasm. It carries out the reaction 3-phosphoshikimate + phosphoenolpyruvate = 5-O-(1-carboxyvinyl)-3-phosphoshikimate + phosphate. It participates in metabolic intermediate biosynthesis; chorismate biosynthesis; chorismate from D-erythrose 4-phosphate and phosphoenolpyruvate: step 6/7. Functionally, catalyzes the transfer of the enolpyruvyl moiety of phosphoenolpyruvate (PEP) to the 5-hydroxyl of shikimate-3-phosphate (S3P) to produce enolpyruvyl shikimate-3-phosphate and inorganic phosphate. This Bartonella henselae (strain ATCC 49882 / DSM 28221 / CCUG 30454 / Houston 1) (Rochalimaea henselae) protein is 3-phosphoshikimate 1-carboxyvinyltransferase.